Here is a 319-residue protein sequence, read N- to C-terminus: Olfactory receptor 51F1 (319 aa).

The Extracellular segment spans residues 1-37; sequence MLQNQDTMEILSNSTSKFPTFLLTGIPGLESAHVWIS. Residues 38–58 traverse the membrane as a helical segment; that stretch reads IPFCCFYAIALSGNSVILFVI. The Cytoplasmic portion of the chain corresponds to 59–75; it reads ITQQSLHEPMYYFLFRL. A helical transmembrane segment spans residues 76–96; the sequence is SATDLGLTVSSLSTTLGILWF. The Extracellular portion of the chain corresponds to 97–106; that stretch reads EAREISLYSC. A disulfide bridge links cysteine 106 with cysteine 188. The helical transmembrane segment at 107–127 threads the bilayer; sequence IVQMFFLHGFTFMESGVLVAT. The Cytoplasmic segment spans residues 128-149; the sequence is AFDRYVAICDPLRYTTILTNSR. Residues 150 to 170 form a helical membrane-spanning segment; it reads IIQMGLLMITRAIVLILPLLL. Residues 171-211 are Extracellular-facing; it reads LLKPLYFCRMNALSHSYCYHPDVIQLACSDIRANSICGLID. Residues 212 to 232 form a helical membrane-spanning segment; the sequence is LILTTGIDTPCIVLSYILIIH. The Cytoplasmic segment spans residues 233–249; that stretch reads SVLRIASPEEWHKVFST. A helical transmembrane segment spans residues 250–270; that stretch reads CVSHVGAVAFFYIHMLSLSLV. Over 271–279 the chain is Extracellular; it reads YRYGRSAPR. Residues 280–300 traverse the membrane as a helical segment; the sequence is VVHSVMANVYLLLPPVLNPII. Residues 301-319 are Cytoplasmic-facing; it reads DSVKTKQIRKAMLSLLLTK.

This sequence belongs to the G-protein coupled receptor 1 family.

The protein resides in the cell membrane. In terms of biological role, odorant receptor. The protein is Olfactory receptor 51F1 (OR51F1) of Homo sapiens (Human).